The chain runs to 55 residues: Spermatid nuclear transition protein 1 (55 aa).

Residues 1–42 are compositionally biased toward basic residues; that stretch reads MSTSRKLKTHGMRRGKNRAPHKGVKRGGSKRKYRKSVLKSRK. A disordered region spans residues 1–55; the sequence is MSTSRKLKTHGMRRGKNRAPHKGVKRGGSKRKYRKSVLKSRKRGDDASRNYRSHL. Residues S36 and S40 each carry the phosphoserine modification.

Belongs to the nuclear transition protein 1 family. In terms of tissue distribution, testis-specific.

It is found in the nucleus. Its subcellular location is the chromosome. Its function is as follows. Plays a key role in the replacement of histones to protamine in the elongating spermatids of mammals. In condensing spermatids, loaded onto the nucleosomes, where it promotes the recruitment and processing of protamines, which are responsible for histone eviction. The histone H2AB1-H2BC1/TH2B dimer is required for loading of TNP1 onto chromatin. The sequence is that of Spermatid nuclear transition protein 1 from Mus musculus (Mouse).